Consider the following 231-residue polypeptide: Orotidine 5'-phosphate decarboxylase (231 aa).

Substrate is bound by residues Asp11, Lys33, 60–69 (DLKFHDIPNT), Thr120, Arg181, Gln190, Gly210, and Arg211. The active-site Proton donor is the Lys62.

The protein belongs to the OMP decarboxylase family. Type 1 subfamily. In terms of assembly, homodimer.

It catalyses the reaction orotidine 5'-phosphate + H(+) = UMP + CO2. It participates in pyrimidine metabolism; UMP biosynthesis via de novo pathway; UMP from orotate: step 2/2. Catalyzes the decarboxylation of orotidine 5'-monophosphate (OMP) to uridine 5'-monophosphate (UMP). This is Orotidine 5'-phosphate decarboxylase from Pseudoalteromonas atlantica (strain T6c / ATCC BAA-1087).